The primary structure comprises 190 residues: Recombination protein RecR (190 aa).

The C4-type zinc-finger motif lies at 58 to 73 (CTQCGGLSEDELCYIC). In terms of domain architecture, Toprim spans 81–167 (SSLCLVESAR…HFTKIAQGVP (87 aa)).

It belongs to the RecR family.

Functionally, may play a role in DNA repair. It seems to be involved in an RecBC-independent recombinational process of DNA repair. It may act with RecF and RecO. The chain is Recombination protein RecR from Nitratiruptor sp. (strain SB155-2).